Consider the following 343-residue polypeptide: DNA repair and recombination protein RadA (343 aa).

107–114 (GEFGAGKS) serves as a coordination point for ATP.

The protein belongs to the eukaryotic RecA-like protein family.

Its function is as follows. Involved in DNA repair and in homologous recombination. Binds and assemble on single-stranded DNA to form a nucleoprotein filament. Hydrolyzes ATP in a ssDNA-dependent manner and promotes DNA strand exchange between homologous DNA molecules. The protein is DNA repair and recombination protein RadA of Halobacterium salinarum (strain ATCC 29341 / DSM 671 / R1).